Here is a 247-residue protein sequence, read N- to C-terminus: Synaptogyrin homolog 1 (247 aa).

The MARVEL domain occupies 21 to 175 (FFKKPTVLFR…AAFFAWRRYE (155 aa)). Helical transmembrane passes span 25 to 45 (PTVL…YSVS), 69 to 89 (CSFA…LIVL), 105 to 125 (AVLA…IGFF), and 151 to 171 (FGIL…FFAW). Positions 206–247 (DSTGIGHVGAPPPQSSYQSGAAPQTMQQPPSNPYTQSEGYGY) are disordered. The segment covering 220 to 247 (SSYQSGAAPQTMQQPPSNPYTQSEGYGY) has biased composition (polar residues).

It belongs to the synaptogyrin family. As to expression, expressed in a wide variety of neurons and is expressed weakly in the non-neuronal distal tip cells. A punctate pattern was observed in the ventral and dorsal nerve cords and the nerve ring. Weak expression is seen in neuronal cell bodies and commissures.

The protein resides in the membrane. This is Synaptogyrin homolog 1 (sng-1) from Caenorhabditis elegans.